Consider the following 255-residue polypeptide: 5'-nucleotidase SurE (255 aa).

Aspartate 8, aspartate 9, serine 40, and asparagine 93 together coordinate a divalent metal cation.

The protein belongs to the SurE nucleotidase family. The cofactor is a divalent metal cation.

Its subcellular location is the cytoplasm. It catalyses the reaction a ribonucleoside 5'-phosphate + H2O = a ribonucleoside + phosphate. Nucleotidase that shows phosphatase activity on nucleoside 5'-monophosphates. This Azorhizobium caulinodans (strain ATCC 43989 / DSM 5975 / JCM 20966 / LMG 6465 / NBRC 14845 / NCIMB 13405 / ORS 571) protein is 5'-nucleotidase SurE.